The sequence spans 235 residues: Ribonuclease PH (235 aa).

Phosphate-binding positions include Arg-86 and 124 to 126 (GTR).

It belongs to the RNase PH family. As to quaternary structure, homohexameric ring arranged as a trimer of dimers.

It catalyses the reaction tRNA(n+1) + phosphate = tRNA(n) + a ribonucleoside 5'-diphosphate. Its function is as follows. Phosphorolytic 3'-5' exoribonuclease that plays an important role in tRNA 3'-end maturation. Removes nucleotide residues following the 3'-CCA terminus of tRNAs; can also add nucleotides to the ends of RNA molecules by using nucleoside diphosphates as substrates, but this may not be physiologically important. Probably plays a role in initiation of 16S rRNA degradation (leading to ribosome degradation) during starvation. This Legionella pneumophila (strain Paris) protein is Ribonuclease PH.